Consider the following 629-residue polypeptide: RNA polymerase sigma factor RpoD (629 aa).

The segment at histidine 183–isoleucine 228 is disordered. Residues aspartate 187–isoleucine 228 are compositionally biased toward acidic residues. The segment at methionine 395–threonine 465 is sigma-70 factor domain-2. An Interaction with polymerase core subunit RpoC motif is present at residues aspartate 419–glutamine 422. Residues glutamate 474 to serine 550 form a sigma-70 factor domain-3 region. A sigma-70 factor domain-4 region spans residues valine 563 to histidine 616. Residues leucine 589–alanine 608 constitute a DNA-binding region (H-T-H motif).

This sequence belongs to the sigma-70 factor family. RpoD/SigA subfamily. As to quaternary structure, interacts transiently with the RNA polymerase catalytic core.

Its subcellular location is the cytoplasm. Sigma factors are initiation factors that promote the attachment of RNA polymerase to specific initiation sites and are then released. This sigma factor is the primary sigma factor during exponential growth. The polypeptide is RNA polymerase sigma factor RpoD (Haemophilus influenzae (strain ATCC 51907 / DSM 11121 / KW20 / Rd)).